The chain runs to 208 residues: Large ribosomal subunit protein bL25 (208 aa).

Belongs to the bacterial ribosomal protein bL25 family. CTC subfamily. Part of the 50S ribosomal subunit; part of the 5S rRNA/L5/L18/L25 subcomplex. Contacts the 5S rRNA. Binds to the 5S rRNA independently of L5 and L18.

This is one of the proteins that binds to the 5S RNA in the ribosome where it forms part of the central protuberance. This chain is Large ribosomal subunit protein bL25, found in Bordetella pertussis (strain Tohama I / ATCC BAA-589 / NCTC 13251).